A 376-amino-acid chain; its full sequence is Light-dependent chlorophyll f synthase (376 aa).

Residues 1-22 form a disordered region; that stretch reads MKLESDHVIATSDSSDYTSEPT. Residues 11–22 show a composition bias toward polar residues; that stretch reads TSDSSDYTSEPT. 5 consecutive transmembrane segments (helical) span residues 51-68, 140-155, 164-178, 219-240, and 298-312; these read YVGW…TAAT, HFLI…EWEL, WISL…ASVS, LHQL…HGSL, and FLAA…SAAL. Residue histidine 140 coordinates a chlorophyll. Histidine 220 serves as a coordination point for a chlorophyll.

Belongs to the reaction center PufL/M/PsbA/D family. In terms of assembly, homodimer.

It localises to the cellular thylakoid membrane. In terms of biological role, synthesizes chlorophyll f or chlorophyllide f (Chl f, 2-formyl chlorophyll a), probably by oxidation of chlorophyll a or chlorophyllide a and reduction of plastoquinone. The reaction is probably light-dependent. Chl f absorbs far red light (FRL, 707 nm in 100% methanol), and is synthesized when cells are grown in FRL, where it provides the advantage of extending the spectral range of harvested light in terrestrial cyanobacteria. When ectopically expressed in Synechococcus PCC 7002 (which does not grow in FRL and does not make Chl f) produces Chl f (0.059% of total chlorophyll). This chain is Light-dependent chlorophyll f synthase, found in Chlorogloeopsis fritschii (strain PCC 9212).